Consider the following 506-residue polypeptide: Maturase K (506 aa).

It belongs to the intron maturase 2 family. MatK subfamily.

It localises to the plastid. The protein resides in the chloroplast. In terms of biological role, usually encoded in the trnK tRNA gene intron. Probably assists in splicing its own and other chloroplast group II introns. This Rhododendron hippophaeoides (Rhododendron) protein is Maturase K.